A 355-amino-acid polypeptide reads, in one-letter code: MDFLHRSGVLIIHHLQEDYRTYYGFLNFMSNVGDPRNIFSIYFPLWFQLNQNVGTKMIWVAVIGDWFNLIFKWILFGHRPYWWIQETEIYPNHSSPCLEQFPTTCETGPGSPSGHAMGSSCVWYVMVTAALSYTISRMEESSVTLHRLTWSFLWSVFWLIQISVCISRVFIATHFPHQVILGVIGGMLVAEAFEHTPGVHMASLSVYLKTNVFLFLFALGFYLLLRLFGIDLLWSVPIAKKWCANPDWIHIDSTPFAGLVRNLGVLFGLGFAINSEMFLRSCQGENGTKPSFRLLCALTSLTTMQLYRFIKIPTHAEPLFYLLSFCKSASIPLMVVALIPYCVHMLMRPGDKKTK.

Residues 1 to 24 are Lumenal-facing; it reads MDFLHRSGVLIIHHLQEDYRTYYG. A helical transmembrane segment spans residues 25 to 45; the sequence is FLNFMSNVGDPRNIFSIYFPL. Topologically, residues 46–56 are cytoplasmic; sequence WFQLNQNVGTK. A helical membrane pass occupies residues 57 to 77; the sequence is MIWVAVIGDWFNLIFKWILFG. Residues 78-115 are Lumenal-facing; the sequence is HRPYWWIQETEIYPNHSSPCLEQFPTTCETGPGSPSGH. Arg-79 serves as a coordination point for substrate. A glycan (N-linked (GlcNAc...) asparagine) is linked at Asn-92. His-115 serves as the catalytic Proton donor. The helical transmembrane segment at 116–136 threads the bilayer; that stretch reads AMGSSCVWYVMVTAALSYTIS. Residues 137-146 are Cytoplasmic-facing; sequence RMEESSVTLH. Residues 147–167 traverse the membrane as a helical segment; it reads RLTWSFLWSVFWLIQISVCIS. Position 168 (Arg-168) is a topological domain, lumenal. Position 168 (Arg-168) interacts with substrate. The helical transmembrane segment at 169–189 threads the bilayer; sequence VFIATHFPHQVILGVIGGMLV. His-174 serves as the catalytic Nucleophile. Over 190–211 the chain is Cytoplasmic; sequence AEAFEHTPGVHMASLSVYLKTN. A helical transmembrane segment spans residues 212–232; the sequence is VFLFLFALGFYLLLRLFGIDL. At 233-252 the chain is on the lumenal side; that stretch reads LWSVPIAKKWCANPDWIHID. Residues 253 to 273 form a helical membrane-spanning segment; sequence STPFAGLVRNLGVLFGLGFAI. At 274-290 the chain is on the cytoplasmic side; that stretch reads NSEMFLRSCQGENGTKP. A helical membrane pass occupies residues 291-307; the sequence is SFRLLCALTSLTTMQLY. Topologically, residues 308–318 are lumenal; sequence RFIKIPTHAEP. Residues 319-339 form a helical membrane-spanning segment; sequence LFYLLSFCKSASIPLMVVALI. The Cytoplasmic segment spans residues 340-355; that stretch reads PYCVHMLMRPGDKKTK. The Prevents secretion from ER signature appears at 352–355; that stretch reads KKTK.

Belongs to the glucose-6-phosphatase family. N-glycosylated; the non-glycosylated form is more unstable and is degraded through the proteasome. Specifically expressed in pancreatic islet cells, in particular those of beta-cell origin. Not detected in testis, kidney, muscle, liver, lung, spleen, brain, pituitary, gastric fundus or heart.

Its subcellular location is the endoplasmic reticulum membrane. The enzyme catalyses D-glucose 6-phosphate + H2O = D-glucose + phosphate. It functions in the pathway carbohydrate biosynthesis; gluconeogenesis. May hydrolyze glucose-6-phosphate to glucose in the endoplasmic reticulum. May be responsible for glucose production through glycogenolysis and gluconeogenesis. In Mus musculus (Mouse), this protein is Glucose-6-phosphatase 2 (G6pc2).